A 204-amino-acid chain; its full sequence is MTGFSNKAIVIDGRGHLLGRLAAVIAKVLLEGNKVVVVRCEQLNISGNFFRNKLKFMSFLRKRCNVNPARGPFHFRAPSKILWKTVRGMIPHKTERGKDALRRLRSYDGCPPPYDNRRRVVVPAALRVFCLKPGRKYCHVGRLSHEVGWKYREVVRKLEDKRKFKAVHKVAYERKLKKITKDAGAKVSKATAPFTAVIQSYGYN.

The protein belongs to the universal ribosomal protein uL13 family.

This is Large ribosomal subunit protein uL13 (RpL13A) from Choristoneura parallela (Spotted fireworm moth).